Consider the following 641-residue polypeptide: Fructose-1,6-bisphosphatase class 3 (641 aa).

Belongs to the FBPase class 3 family. Mn(2+) serves as cofactor.

The enzyme catalyses beta-D-fructose 1,6-bisphosphate + H2O = beta-D-fructose 6-phosphate + phosphate. Its pathway is carbohydrate biosynthesis; gluconeogenesis. The protein is Fructose-1,6-bisphosphatase class 3 of Ligilactobacillus salivarius (strain UCC118) (Lactobacillus salivarius).